We begin with the raw amino-acid sequence, 471 residues long: Putative pentatricopeptide repeat-containing protein At1g53330 (471 aa).

10 PPR repeats span residues 46 to 81, 82 to 116, 117 to 147, 151 to 185, 186 to 221, 222 to 256, 257 to 291, 292 to 326, 327 to 361, and 362 to 396; these read SLLC…RIVP, TEII…RCQR, TVKS…IDEF, DACT…KVKP, TGVT…GVRP, TVHI…KIKV, DAAI…GCKP, DTVT…GLKP, DVIS…GCSP, and DTLS…GYKP.

This sequence belongs to the PPR family. P subfamily.

In terms of biological role, involved during embryo development. In Arabidopsis thaliana (Mouse-ear cress), this protein is Putative pentatricopeptide repeat-containing protein At1g53330.